Consider the following 456-residue polypeptide: MEGSWFHRKRFSFYLLLGFLLQGRGVTFTINCSGFGQHGADPTALNSVFNRKPFRPVTNISVPTQVNISFAMSAILDVNEQLHLLSSFLWLEMVWDNPFISWNPEECEGITKMSMAAKNLWLPDIFIIELMDVDKTPKGLTAYVSNEGRIRYKKPMKVDSICNLDIFYFPFDQQNCTLTFSSFLYTVDSMLLDMEKEVWEITDASRNILQTHGEWELLGLSKATAKLSRGGNLYDQIVFYVAIRRRPSLYVINLLVPSGFLVAIDALSFYLPVKSGNRVPFKITLLLGYNVFLLMMSDLLPTSGTPLIGVYFALCLSLMVGSLLETIFITHLLHVATTQPPPLPRWLHSLLLHCNSPGRCCPTAPQKENKGPGLTPTHLPGVKEPEVSAGQMPGPAEAELTGGSEWTRAQREHEAQKQHSVELWLQFSHAMDAMLFRLYLLFMASSIITVICLWNT.

The first 25 residues, 1-25 (MEGSWFHRKRFSFYLLLGFLLQGRG), serve as a signal peptide directing secretion. Residues 26 to 248 (VTFTINCSGF…FYVAIRRRPS (223 aa)) lie on the Extracellular side of the membrane. Cysteine 162 and cysteine 176 are disulfide-bonded. An N-linked (GlcNAc...) asparagine glycan is attached at asparagine 175. The chain crosses the membrane as a helical span at residues 249-269 (LYVINLLVPSGFLVAIDALSF). The Cytoplasmic portion of the chain corresponds to 270 to 282 (YLPVKSGNRVPFK). Residues 283 to 303 (ITLLLGYNVFLLMMSDLLPTS) traverse the membrane as a helical segment. Residues 304-307 (GTPL) are Extracellular-facing. A helical membrane pass occupies residues 308-328 (IGVYFALCLSLMVGSLLETIF). Residues 329-433 (ITHLLHVATT…WLQFSHAMDA (105 aa)) are Cytoplasmic-facing. The tract at residues 401–432 (TGGSEWTRAQREHEAQKQHSVELWLQFSHAMD) is HA-stretch; determines single-channel conductance in 5-HT3 receptors. Residues 434-454 (MLFRLYLLFMASSIITVICLW) traverse the membrane as a helical segment. Residues 455–456 (NT) are Extracellular-facing.

This sequence belongs to the ligand-gated ion channel (TC 1.A.9) family. 5-hydroxytryptamine receptor (TC 1.A.9.2) subfamily. HTR3E sub-subfamily. As to quaternary structure, forms homopentameric as well as heteropentameric serotonin-activated cation-selective channel complexes with HTR3A. The homomeric complex is not functional. Heteropentameric complexes display properties which resemble that of neuronal serotonin-activated channels in vivo. As to expression, expressed in adult colon and intestine.

The protein resides in the postsynaptic cell membrane. It is found in the cell membrane. It catalyses the reaction Na(+)(in) = Na(+)(out). The catalysed reaction is K(+)(in) = K(+)(out). It carries out the reaction Ca(2+)(in) = Ca(2+)(out). Functionally, forms serotonin (5-hydroxytryptamine/5-HT3)-activated cation-selective channel complexes, which when activated cause fast, depolarizing responses in neurons. This is 5-hydroxytryptamine receptor 3E from Homo sapiens (Human).